The chain runs to 91 residues: Translation initiation factor IF-1 (91 aa).

An S1-like domain is found at 1 to 72 (MAKEELLEFE…DRGRINFRHK (72 aa)). A disordered region spans residues 70 to 91 (RHKAEGNAPPPGARRQQNFRRR).

It belongs to the IF-1 family. Component of the 30S ribosomal translation pre-initiation complex which assembles on the 30S ribosome in the order IF-2 and IF-3, IF-1 and N-formylmethionyl-tRNA(fMet); mRNA recruitment can occur at any time during PIC assembly.

The protein localises to the cytoplasm. Functionally, one of the essential components for the initiation of protein synthesis. Stabilizes the binding of IF-2 and IF-3 on the 30S subunit to which N-formylmethionyl-tRNA(fMet) subsequently binds. Helps modulate mRNA selection, yielding the 30S pre-initiation complex (PIC). Upon addition of the 50S ribosomal subunit IF-1, IF-2 and IF-3 are released leaving the mature 70S translation initiation complex. In Azorhizobium caulinodans (strain ATCC 43989 / DSM 5975 / JCM 20966 / LMG 6465 / NBRC 14845 / NCIMB 13405 / ORS 571), this protein is Translation initiation factor IF-1.